A 500-amino-acid chain; its full sequence is Lysine--tRNA ligase (500 aa).

E411 and E418 together coordinate Mg(2+).

The protein belongs to the class-II aminoacyl-tRNA synthetase family. Homodimer. Mg(2+) is required as a cofactor.

It is found in the cytoplasm. The enzyme catalyses tRNA(Lys) + L-lysine + ATP = L-lysyl-tRNA(Lys) + AMP + diphosphate. This chain is Lysine--tRNA ligase, found in Actinobacillus pleuropneumoniae serotype 7 (strain AP76).